Here is a 107-residue protein sequence, read N- to C-terminus: Integration host factor subunit alpha (107 aa).

Belongs to the bacterial histone-like protein family. Heterodimer of an alpha and a beta chain.

Its function is as follows. This protein is one of the two subunits of integration host factor, a specific DNA-binding protein that functions in genetic recombination as well as in transcriptional and translational control. This chain is Integration host factor subunit alpha, found in Brucella abortus (strain S19).